Consider the following 236-residue polypeptide: Small ribosomal subunit protein uS2c (236 aa).

The protein belongs to the universal ribosomal protein uS2 family.

It localises to the plastid. The protein localises to the chloroplast. The protein is Small ribosomal subunit protein uS2c (rps2) of Phaseolus vulgaris (Kidney bean).